The primary structure comprises 873 residues: MVASLSGAQIRQTFLDFYAAKGHKILPSASLVPEDPTVLLTIAGMLPFKPIFLGQREAEVPRATTSQKCIRTNDIENVGQTARHHTYFEMLGNFSFGDYFKEQAIAWAWELSTEVYKLPPERIVPSVFEEDDEAFAIWRDKIGIPEHRIQRMGAEDNFWASGPTGPCGPCSELYYDFYPEKGDDKIDLEDDTRFIEYYNLVFMEYNRDSDGKLAPLKNKNIDTGLGLERMAQILQGVPNNYETDLIFPIIETAAKIAGIKYKKSKAKTKTSLKVVGDHVRSVVQMIADGITASNVGRGYVLRRLIRRVVRHGQLIGIDGAFITQVAETAIASLEVAYPEVREREKIIKTELEREEAQFLKTLNRGEKLLGEIMAKKPKQISGKDAFDLYDTYGFPLELTQEIAAEQGLTVDEDGFAKAMKEQQDRGRSAHKTIDLTVQSALEQLAATVHPTDFLGYTDFSAKAKVAALLVKGETVDQASAGSEVQIALDQTPFYAESGGQIGDRGYLNGKDVVVRIEDVQKESDIFIHYGRIERGTLEVGDKLTAQIDLACRRQVQAHHTATHLLQAALKNIVDESIGQAGSLVAFDRLRFDFNYNQAVTPEQIQEIETQINTWIAEAHTTETEVMPIAEAKAKGAVAMFGEKYGAEVRVMDVPGVSMELCGGTHVKNTSEIGLFKIVTEAGVASGVRRIEAIAGPAVLEYLNVRDAVVRDLSDRFKAKPEELPERITTLQADLKTAQKQLDTLKAQLALVKSEQLLDQAEPAGEVKVLVSQLEGVDSESLKTAAGRLLQKLGEGAVVLGSVPAEGKVSLVAAFSPKVIEQGLQAGKFVGAIAKQCGGGGGGRPNLAQAGGRDPSKLADALDDAQKQLLAQLK.

The Zn(2+) site is built by His559, His563, Cys661, and His665.

This sequence belongs to the class-II aminoacyl-tRNA synthetase family. It depends on Zn(2+) as a cofactor.

It localises to the cytoplasm. It catalyses the reaction tRNA(Ala) + L-alanine + ATP = L-alanyl-tRNA(Ala) + AMP + diphosphate. In terms of biological role, catalyzes the attachment of alanine to tRNA(Ala) in a two-step reaction: alanine is first activated by ATP to form Ala-AMP and then transferred to the acceptor end of tRNA(Ala). Also edits incorrectly charged Ser-tRNA(Ala) and Gly-tRNA(Ala) via its editing domain. This Acaryochloris marina (strain MBIC 11017) protein is Alanine--tRNA ligase.